The chain runs to 523 residues: Tryptamine 5-hydroxylase (523 aa).

Residues 5-25 (MASTMSLALLVLSAAYVLVAL) form a helical membrane-spanning segment. Residue C453 coordinates heme.

The protein belongs to the cytochrome P450 family. Requires heme as cofactor.

The protein resides in the endoplasmic reticulum membrane. The enzyme catalyses tryptamine + reduced [NADPH--hemoprotein reductase] + O2 = serotonin + oxidized [NADPH--hemoprotein reductase] + H2O + H(+). Involved in serotonin biosynthesis. Catalyzes the conversion of tryptamine to serotonin. Accumulation of serotonin may play a role in innate immunity. This chain is Tryptamine 5-hydroxylase, found in Oryza sativa subsp. japonica (Rice).